A 287-amino-acid chain; its full sequence is Protease HtpX (287 aa).

Helical transmembrane passes span 4–24 and 33–53; these read IFLLIATNMAILLVASIVMSI and GGLLVFAAIFGFGGAFISLAI. Histidine 139 is a binding site for Zn(2+). Residue glutamate 140 is part of the active site. Histidine 143 provides a ligand contact to Zn(2+). 2 helical membrane-spanning segments follow: residues 154 to 174 and 195 to 215; these read LIQGVVNTFVIFAARVVAGII and AVVFVLDMLFGILASIIVAYF. Residue glutamate 220 coordinates Zn(2+).

It belongs to the peptidase M48B family. Requires Zn(2+) as cofactor.

The protein localises to the cell inner membrane. This is Protease HtpX from Shewanella halifaxensis (strain HAW-EB4).